Reading from the N-terminus, the 268-residue chain is Orotidine 5'-phosphate decarboxylase (268 aa).

Residues D37, 59–61, 91–100, Y217, and R235 each bind substrate; these read KTH and DRKFADIGNT. Catalysis depends on K93, which acts as the Proton donor.

It belongs to the OMP decarboxylase family.

It catalyses the reaction orotidine 5'-phosphate + H(+) = UMP + CO2. It functions in the pathway pyrimidine metabolism; UMP biosynthesis via de novo pathway; UMP from orotate: step 2/2. In Maudiozyma exigua (Yeast), this protein is Orotidine 5'-phosphate decarboxylase (URA4).